The chain runs to 59 residues: MNFTKLFAIVLLAALVLLGQTEAGGLKKLGKKLEGVGKRVFKASEKALPVAVGIKALGK.

A signal peptide spans Met1 to Ala23.

The protein belongs to the cecropin family.

The protein resides in the secreted. Cecropins have lytic and antibacterial activity against several Gram-positive and Gram-negative bacteria. The protein is Cecropin-A1 (CECA1) of Aedes albopictus (Asian tiger mosquito).